A 1043-amino-acid chain; its full sequence is RNA cytidine acetyltransferase (1043 aa).

ATP contacts are provided by residues 285–294 (GRGKSAAVGL) and arginine 462. One can recognise an N-acetyltransferase domain in the interval 551–736 (VLMAPIDKSR…VPVYIRQNSN (186 aa)). Acetyl-CoA contacts are provided by residues 622-624 (VAV), 629-635 (QSMGYGG), and arginine 723. The disordered stretch occupies residues 1020 to 1043 (IPDAKDPANKNAKKKKRFSSGGRR). Over residues 1030-1043 (NAKKKKRFSSGGRR) the composition is skewed to basic residues.

The protein belongs to the RNA cytidine acetyltransferase family. NAT10 subfamily. Part of the small subunit (SSU) processome, composed of more than 70 proteins and the RNA chaperone small nucleolar RNA (snoRNA) U3.

The protein resides in the nucleus. The protein localises to the nucleolus. The enzyme catalyses a cytidine in 18S rRNA + acetyl-CoA + ATP + H2O = an N(4)-acetylcytidine in 18S rRNA + ADP + phosphate + CoA + H(+). It carries out the reaction a cytidine in tRNA + acetyl-CoA + ATP + H2O = an N(4)-acetylcytidine in tRNA + ADP + phosphate + CoA + H(+). Its function is as follows. RNA cytidine acetyltransferase with specificity toward both 18S rRNA and tRNAs. Catalyzes the formation of N(4)-acetylcytidine (ac4C) in 18S rRNA. Required for early nucleolar cleavages of precursor rRNA at sites A0, A1 and A2 during 18S rRNA synthesis. Catalyzes the formation of ac4C in serine and leucine tRNAs. Requires a tRNA-binding adapter protein for full tRNA acetyltransferase activity but not for 18S rRNA acetylation. Part of the small subunit (SSU) processome, first precursor of the small eukaryotic ribosomal subunit. During the assembly of the SSU processome in the nucleolus, many ribosome biogenesis factors, an RNA chaperone and ribosomal proteins associate with the nascent pre-rRNA and work in concert to generate RNA folding, modifications, rearrangements and cleavage as well as targeted degradation of pre-ribosomal RNA by the RNA exosome. This Caenorhabditis elegans protein is RNA cytidine acetyltransferase.